Reading from the N-terminus, the 183-residue chain is Capsid protein (183 aa).

The segment at 136-183 (NAPILSTLPETTVVRRRGRSPRRRTPSPRRRRSQSPRRRRSQSRESQC) is disordered. The segment covering 149–176 (VRRRGRSPRRRTPSPRRRRSQSPRRRRS) has biased composition (basic residues). A phosphoserine; by host mark is found at serine 155, serine 162, and serine 170. The stretch at 155 to 161 (SPRRRTP) is one 1; half-length repeat. Residues 155–177 (SPRRRTPSPRRRRSQSPRRRRSQ) form a 3 X 8 AA repeats of S-P-R-R-R-[PR]-S-Q region. The Bipartite nuclear localization signal signature appears at 158-175 (RRTPSPRRRRSQSPRRRR). Tandem repeats lie at residues 162–169 (SPRRRRSQ) and 170–177 (SPRRRRSQ). The segment at 177-183 (QSRESQC) is RNA binding.

This sequence belongs to the orthohepadnavirus core antigen family. As to quaternary structure, homodimerizes, then multimerizes. Interacts with cytosol exposed regions of viral L glycoprotein present in the reticulum-to-Golgi compartment. Interacts with human FLNB. Phosphorylated form interacts with host importin alpha; this interaction depends on the exposure of the NLS, which itself depends upon genome maturation and/or phosphorylation of the capsid protein. Interacts with host NUP153. Phosphorylated by host SRPK1, SRPK2, and maybe protein kinase C or GAPDH. Phosphorylation is critical for pregenomic RNA packaging. Protein kinase C phosphorylation is stimulated by HBx protein and may play a role in transport of the viral genome to the nucleus at the late step during the viral replication cycle.

It is found in the virion. It localises to the host cytoplasm. Self assembles to form an icosahedral capsid. Most capsids appear to be large particles with an icosahedral symmetry of T=4 and consist of 240 copies of capsid protein, though a fraction forms smaller T=3 particles consisting of 180 capsid proteins. Entering capsids are transported along microtubules to the nucleus. Phosphorylation of the capsid is thought to induce exposure of nuclear localization signal in the C-terminal portion of the capsid protein that allows binding to the nuclear pore complex via the importin (karyopherin-) alpha and beta. Capsids are imported in intact form through the nuclear pore into the nuclear basket, where it probably binds NUP153. Only capsids that contain the mature viral genome can release the viral DNA and capsid protein into the nucleoplasm. Immature capsids get stuck in the basket. Capsids encapsulate the pre-genomic RNA and the P protein. Pre-genomic RNA is reverse-transcribed into DNA while the capsid is still in the cytoplasm. The capsid can then either be directed to the nucleus, providing more genomes for transcription, or bud through the endoplasmic reticulum to provide new virions. In Hepatitis B virus genotype B2 (isolate Indonesia/pIDW420/1988) (HBV-B), this protein is Capsid protein.